The sequence spans 266 residues: Thymidylate synthase (266 aa).

Arg-24 is a binding site for dUMP. His-54 lines the (6R)-5,10-methylene-5,6,7,8-tetrahydrofolate pocket. Position 129–130 (129–130 (RR)) interacts with dUMP. Cys-149 functions as the Nucleophile in the catalytic mechanism. DUMP is bound by residues 169 to 172 (RSAD), Asn-180, and 210 to 212 (HIY). Residue Asp-172 coordinates (6R)-5,10-methylene-5,6,7,8-tetrahydrofolate. Ala-265 is a binding site for (6R)-5,10-methylene-5,6,7,8-tetrahydrofolate.

Belongs to the thymidylate synthase family. Bacterial-type ThyA subfamily. Homodimer.

The protein localises to the cytoplasm. The catalysed reaction is dUMP + (6R)-5,10-methylene-5,6,7,8-tetrahydrofolate = 7,8-dihydrofolate + dTMP. It functions in the pathway pyrimidine metabolism; dTTP biosynthesis. Functionally, catalyzes the reductive methylation of 2'-deoxyuridine-5'-monophosphate (dUMP) to 2'-deoxythymidine-5'-monophosphate (dTMP) while utilizing 5,10-methylenetetrahydrofolate (mTHF) as the methyl donor and reductant in the reaction, yielding dihydrofolate (DHF) as a by-product. This enzymatic reaction provides an intracellular de novo source of dTMP, an essential precursor for DNA biosynthesis. The sequence is that of Thymidylate synthase from Mycobacterium bovis (strain ATCC BAA-935 / AF2122/97).